A 776-amino-acid polypeptide reads, in one-letter code: LPS-assembly protein LptD (776 aa).

The first 24 residues, 1–24 (MQHFSRTFLAASIATALFAPYAQA), serve as a signal peptide directing secretion.

The protein belongs to the LptD family. As to quaternary structure, component of the lipopolysaccharide transport and assembly complex. Interacts with LptE and LptA.

The protein localises to the cell outer membrane. In terms of biological role, together with LptE, is involved in the assembly of lipopolysaccharide (LPS) at the surface of the outer membrane. The polypeptide is LPS-assembly protein LptD (Vibrio vulnificus (strain CMCP6)).